Reading from the N-terminus, the 414-residue chain is Protein FAM81B (414 aa).

The segment covering 1-13 (MTSETDINKSASP) has biased composition (polar residues). The interval 1–43 (MTSETDINKSASPTAAAKEQPEEPDGPLPGSASEQEKKVRFSP) is disordered. 4 coiled-coil regions span residues 70-94 (NTQR…LEQA), 121-149 (LLEN…QIKA), 188-223 (KLSG…NLDT), and 266-414 (LNLY…LQES).

Belongs to the FAM81 family.

This is Protein FAM81B (FAM81B) from Bos taurus (Bovine).